The primary structure comprises 334 residues: Ketol-acid reductoisomerase (NADP(+)) (334 aa).

The KARI N-terminal Rossmann domain maps to 1–181 (MTTVYYDQDV…GATRAGVIET (181 aa)). NADP(+) contacts are provided by residues 25–28 (YGSQ), arginine 48, serine 52, and 82–85 (DEIQ). Residue histidine 107 is part of the active site. Position 133 (glycine 133) interacts with NADP(+). The KARI C-terminal knotted domain maps to 182–327 (TFKEETETDL…RELREMMPFI (146 aa)). Mg(2+) contacts are provided by aspartate 190, glutamate 194, glutamate 226, and glutamate 230. A substrate-binding site is contributed by serine 251.

The protein belongs to the ketol-acid reductoisomerase family. Requires Mg(2+) as cofactor.

It carries out the reaction (2R)-2,3-dihydroxy-3-methylbutanoate + NADP(+) = (2S)-2-acetolactate + NADPH + H(+). It catalyses the reaction (2R,3R)-2,3-dihydroxy-3-methylpentanoate + NADP(+) = (S)-2-ethyl-2-hydroxy-3-oxobutanoate + NADPH + H(+). It functions in the pathway amino-acid biosynthesis; L-isoleucine biosynthesis; L-isoleucine from 2-oxobutanoate: step 2/4. The protein operates within amino-acid biosynthesis; L-valine biosynthesis; L-valine from pyruvate: step 2/4. Functionally, involved in the biosynthesis of branched-chain amino acids (BCAA). Catalyzes an alkyl-migration followed by a ketol-acid reduction of (S)-2-acetolactate (S2AL) to yield (R)-2,3-dihydroxy-isovalerate. In the isomerase reaction, S2AL is rearranged via a Mg-dependent methyl migration to produce 3-hydroxy-3-methyl-2-ketobutyrate (HMKB). In the reductase reaction, this 2-ketoacid undergoes a metal-dependent reduction by NADPH to yield (R)-2,3-dihydroxy-isovalerate. This Staphylococcus aureus (strain MSSA476) protein is Ketol-acid reductoisomerase (NADP(+)).